The primary structure comprises 682 residues: Iron-phytosiderophore transporter yellow stripe 1 (682 aa).

Residues 1–36 form a disordered region; that stretch reads MDLARRGGAAGADDEGEIERHEPAPEDMESDPAAAR. 15 helical membrane passes run 56–76, 79–99, 124–144, 167–187, 236–256, 288–308, 334–354, 396–416, 428–448, 460–480, 514–534, 549–569, 574–594, 612–632, and 640–660; these read GVVAALLIGFMYSVIVMKIAL, GLVPTLNVSAALMAFLALRGW, CAVACYTIAFGGGFGSTLLGL, GFGWMAGFVAAISFAGLLSLI, LSFVWSFFQWFYTGGEVCGFV, LVNISTLLGAILSWGILWPLI, FLCIALIMGDGTYHFFKVFGV, FPAWAAYAGYAALTVVSAVII, VIVAYVLAPLLGFANSYGTGL, IALFIFAAWAGRDNGVIAGLA, VAQFIGTAMGCVVAPLTFLLF, APYGLIYRNMAILGVEGFSVL, LALSAGFFAFAFVFSVARDVL, FLVGGSFAIDMCVGSLAVFVW, and AVFMVPAVASGLICGDGIWTF.

It belongs to the YSL (TC 2.A.67.2) family. As to expression, expressed in roots of young maize seedlings. Not detected in leaves of iron-sufficient plants, but accumulates in roots and leaves of iron-deficient plants.

It localises to the membrane. Functionally, involved in Fe(3+) uptake. Acts as a proton-coupled symporter for phytosiderophore- and nicotianamine-chelated metals. Capable of transporting either Fe(2+)-nicotianamine or Fe(3+)-phytosiderophore. May transport iron, zinc, nickel, copper and, at a lower rate, manganese and cadmium. In Zea mays (Maize), this protein is Iron-phytosiderophore transporter yellow stripe 1 (YS1).